Here is a 189-residue protein sequence, read N- to C-terminus: UPF0301 protein A1E_00140 (189 aa).

It belongs to the UPF0301 (AlgH) family.

The chain is UPF0301 protein A1E_00140 from Rickettsia canadensis (strain McKiel).